The following is a 720-amino-acid chain: Nucleoporin 88 (720 aa).

A coiled-coil region spans residues 584–611; that stretch reads LALCREDRKSLTEAAERLADKYEDAKYR.

In terms of tissue distribution, widely expressed. Higher levels of expression are detected in highly proliferative frontal regions of the embryo, e.g. brain, eye and anterior trunk.

The protein localises to the nucleus. Its subcellular location is the nuclear pore complex. Its function is as follows. Component of the nuclear pore complex. This chain is Nucleoporin 88, found in Danio rerio (Zebrafish).